The primary structure comprises 765 residues: Protein O-mannosyl-transferase 2 (765 aa).

The interval 1–31 is disordered; sequence MAASVVKTPKCPRRGSVKDVAQNAPRTAPTS. Residues 35 to 55 form a helical membrane-spanning segment; the sequence is ANWNWWLLLATVFLVTFATRF. Residues Asn80, Asn106, and Asn119 are each glycosylated (N-linked (GlcNAc...) asparagine). A run of 5 helical transmembrane segments spans residues 128–148, 175–195, 206–226, 228–248, and 268–288; these read YFCT…VYDL, ILLD…MVKV, GLRW…TISV, FVGL…LWLI, and ITLI…HLSV. Residues Asn290 and Asn314 are each glycosylated (N-linked (GlcNAc...) asparagine). MIR domains are found at residues 318-374, 384-440, and 445-501; these read PRDV…IRPH, VQIL…VLIV, and NETV…VEDN. Asn445 carries N-linked (GlcNAc...) asparagine glycosylation. A run of 4 helical transmembrane segments spans residues 566–586, 667–687, 689–709, and 719–739; these read IYLL…ALFV, LFLG…VLYF, HYFP…NYIL, and VILG…SPLA. N-linked (GlcNAc...) asparagine glycosylation occurs at Asn751.

It belongs to the glycosyltransferase 39 family. Interacts with Rt/POMT1. As to expression, at the cellular blastoderm stage, expression accumulates in the ventrally located mesoderm primordium. At germ band extension, mesoderm expression is seen as stripes of strong expression. A very strong signal is also detected in the invaginating gut. As the germ band retracts, mesodermal expression decays and becomes restricted to somatic muscle precursors.

Its subcellular location is the endoplasmic reticulum membrane. It carries out the reaction a di-trans,poly-cis-dolichyl beta-D-mannosyl phosphate + L-seryl-[protein] = 3-O-(alpha-D-mannosyl)-L-seryl-[protein] + a di-trans,poly-cis-dolichyl phosphate + H(+). The enzyme catalyses a di-trans,poly-cis-dolichyl beta-D-mannosyl phosphate + L-threonyl-[protein] = 3-O-(alpha-D-mannosyl)-L-threonyl-[protein] + a di-trans,poly-cis-dolichyl phosphate + H(+). It functions in the pathway protein modification; protein glycosylation. Its function is as follows. Rt/POMT1 and tw/POMT2 function as a protein O-mannosyltransferase in association with each other to generate and maintain normal muscle development. This chain is Protein O-mannosyl-transferase 2 (tw), found in Drosophila melanogaster (Fruit fly).